Consider the following 361-residue polypeptide: Cytosolic Fe-S cluster assembly factor CFD1 (361 aa).

Position 37–44 (37–44 (GKGGVGKS)) interacts with ATP. [4Fe-4S] cluster contacts are provided by C218 and C221. The disordered stretch occupies residues 293–314 (HSQSAAAQLPNSGDTESLTPAG).

It belongs to the Mrp/NBP35 ATP-binding proteins family. NUBP2/CFD1 subfamily. Heterotetramer of 2 NBP35 and 2 CFD1 chains. Requires [4Fe-4S] cluster as cofactor.

The protein resides in the cytoplasm. Component of the cytosolic iron-sulfur (Fe/S) protein assembly (CIA) machinery. Required for maturation of extramitochondrial Fe-S proteins. The NBP35-CFD1 heterotetramer forms a Fe-S scaffold complex, mediating the de novo assembly of an Fe-S cluster and its transfer to target apoproteins. The chain is Cytosolic Fe-S cluster assembly factor CFD1 from Mycosarcoma maydis (Corn smut fungus).